The primary structure comprises 467 residues: Glutamate--tRNA ligase (467 aa).

Positions 10-20 match the 'HIGH' region motif; the sequence is PSPTGYLHVGG. Positions 99, 101, 126, and 128 each coordinate Zn(2+). A 'KMSKS' region motif is present at residues 237–241; the sequence is RLSKR. Position 240 (Lys240) interacts with ATP.

This sequence belongs to the class-I aminoacyl-tRNA synthetase family. Glutamate--tRNA ligase type 1 subfamily. Monomer. Zn(2+) is required as a cofactor.

The protein resides in the cytoplasm. The enzyme catalyses tRNA(Glu) + L-glutamate + ATP = L-glutamyl-tRNA(Glu) + AMP + diphosphate. Catalyzes the attachment of glutamate to tRNA(Glu) in a two-step reaction: glutamate is first activated by ATP to form Glu-AMP and then transferred to the acceptor end of tRNA(Glu). In Geotalea uraniireducens (strain Rf4) (Geobacter uraniireducens), this protein is Glutamate--tRNA ligase.